The following is a 360-amino-acid chain: Phosphoserine aminotransferase (360 aa).

Arg41 is a binding site for L-glutamate. 4 residues coordinate pyridoxal 5'-phosphate: Trp101, Thr152, Asp172, and Gln195. Lys196 is subject to N6-(pyridoxal phosphate)lysine. 237 to 238 (NT) provides a ligand contact to pyridoxal 5'-phosphate.

Belongs to the class-V pyridoxal-phosphate-dependent aminotransferase family. SerC subfamily. As to quaternary structure, homodimer. It depends on pyridoxal 5'-phosphate as a cofactor.

Its subcellular location is the cytoplasm. It carries out the reaction O-phospho-L-serine + 2-oxoglutarate = 3-phosphooxypyruvate + L-glutamate. It catalyses the reaction 4-(phosphooxy)-L-threonine + 2-oxoglutarate = (R)-3-hydroxy-2-oxo-4-phosphooxybutanoate + L-glutamate. The protein operates within amino-acid biosynthesis; L-serine biosynthesis; L-serine from 3-phospho-D-glycerate: step 2/3. It functions in the pathway cofactor biosynthesis; pyridoxine 5'-phosphate biosynthesis; pyridoxine 5'-phosphate from D-erythrose 4-phosphate: step 3/5. Catalyzes the reversible conversion of 3-phosphohydroxypyruvate to phosphoserine and of 3-hydroxy-2-oxo-4-phosphonooxybutanoate to phosphohydroxythreonine. In Burkholderia cenocepacia (strain ATCC BAA-245 / DSM 16553 / LMG 16656 / NCTC 13227 / J2315 / CF5610) (Burkholderia cepacia (strain J2315)), this protein is Phosphoserine aminotransferase.